The primary structure comprises 682 residues: Polyadenylate-binding protein 5 (682 aa).

4 RRM domains span residues 59 to 136 (SSLY…LSNR), 146 to 223 (GNVF…HFVR), 239 to 316 (TNVY…RAQK), and 342 to 419 (SNLY…LAQR). In terms of domain architecture, PABC spans 588–665 (TISKLASDLA…ALDVLRRSAD (78 aa)). The residue at position 600 (Ser600) is a Phosphoserine.

Belongs to the polyadenylate-binding protein type-1 family. As to expression, expressed predominantly in immature flowers but also at lower levels in mature flowers and siliques. Detected in tapetum, pollen, ovules and developing seeds. Also detected in primary inflorescences and immature siliques.

The protein localises to the cytoplasm. The protein resides in the nucleus. Binds the poly(A) tail of mRNA. Appears to be an important mediator of the multiple roles of the poly(A) tail in mRNA biogenesis, stability and translation. This is Polyadenylate-binding protein 5 (PAB5) from Arabidopsis thaliana (Mouse-ear cress).